We begin with the raw amino-acid sequence, 260 residues long: Dehydrogenase/reductase SDR family member 11 (260 aa).

Residues 1 to 30 (MARPGMERWRDRLALVTGASGGIGAAVARA) form the signal peptide. NADP(+)-binding positions include 18-23 (GASGGI), 43-44 (RT), glutamate 49, 70-71 (DL), and asparagine 97. Positions 151 and 166 each coordinate substrate. NADP(+) is bound by residues tyrosine 166, lysine 170, 201–204 (VETQ), and lysine 208. The Proton acceptor role is filled by tyrosine 166.

The protein belongs to the short-chain dehydrogenases/reductases (SDR) family. Homotetramer. Isoform 1: Ubiquitously expressed, with highest levels in testis, small intestine, colon, kidney, brain and heart. Isoform 3: Expressed in brain, heart and skeletal muscle.

The protein resides in the secreted. It carries out the reaction a 3beta-hydroxysteroid + NADP(+) = a 3-oxosteroid + NADPH + H(+). The enzyme catalyses 17beta-estradiol + NAD(+) = estrone + NADH + H(+). The catalysed reaction is 17beta-estradiol + NADP(+) = estrone + NADPH + H(+). It participates in steroid biosynthesis; estrogen biosynthesis. With respect to regulation, inhibited by flavonoids including apigenin, luteolin, genistein, kaempferol and quercetin and also by carbenoxolone, zearalenone, glycyrrhetinic, curcumin and flufenamic acid. Functionally, catalyzes the conversion of the 17-keto group of estrone, 4- and 5-androstenes and 5-alpha-androstanes into their 17-beta-hydroxyl metabolites and the conversion of the 3-keto group of 3-, 3,17- and 3,20- diketosteroids into their 3-hydroxyl metabolites. Exhibits reductive 3-beta-hydroxysteroid dehydrogenase activity toward 5-beta-androstanes, 5-beta-pregnanes, 4-pregnenes and bile acids. May also reduce endogenous and exogenous alpha-dicarbonyl compounds and xenobiotic alicyclic ketones. The polypeptide is Dehydrogenase/reductase SDR family member 11 (DHRS11) (Homo sapiens (Human)).